Reading from the N-terminus, the 359-residue chain is 3-isopropylmalate dehydrogenase (359 aa).

76–89 (GPKWDTIERSIRPE) contributes to the NAD(+) binding site. Residues Arg96, Arg106, Arg134, and Asp225 each coordinate substrate. 3 residues coordinate Mg(2+): Asp225, Asp249, and Asp253. 283-295 (GSAPDIAGQNVAN) is a binding site for NAD(+).

The protein belongs to the isocitrate and isopropylmalate dehydrogenases family. LeuB type 1 subfamily. In terms of assembly, homodimer. It depends on Mg(2+) as a cofactor. The cofactor is Mn(2+).

Its subcellular location is the cytoplasm. It carries out the reaction (2R,3S)-3-isopropylmalate + NAD(+) = 4-methyl-2-oxopentanoate + CO2 + NADH. It participates in amino-acid biosynthesis; L-leucine biosynthesis; L-leucine from 3-methyl-2-oxobutanoate: step 3/4. Its function is as follows. Catalyzes the oxidation of 3-carboxy-2-hydroxy-4-methylpentanoate (3-isopropylmalate) to 3-carboxy-4-methyl-2-oxopentanoate. The product decarboxylates to 4-methyl-2 oxopentanoate. The sequence is that of 3-isopropylmalate dehydrogenase from Acinetobacter baylyi (strain ATCC 33305 / BD413 / ADP1).